The primary structure comprises 375 residues: Ferredoxin--NADP reductase, root-type isozyme, chloroplastic (375 aa).

A chloroplast-targeting transit peptide spans 1–60 (MAHSALSQVSVAVPLQTDSSFRRSTFKATSITFSDRSSWISMPPIDLKAAPSRNQHIVCM). The FAD-binding FR-type domain occupies 91-219 (KEPYTATIVS…TGPSGKIMLL (129 aa)). FAD contacts are provided by residues 151 to 154 (RLYL), 172 to 174 (CVR), tyrosine 178, 193 to 195 (VCS), and threonine 235. Arginine 174 lines the NADP(+) pocket. Residues threonine 235, 266-267 (VA), 296-297 (SR), lysine 306, 334-335 (GL), and glutamate 373 contribute to the NADP(+) site.

This sequence belongs to the ferredoxin--NADP reductase type 1 family. The cofactor is FAD.

The protein resides in the plastid. The protein localises to the chloroplast. The enzyme catalyses 2 reduced [2Fe-2S]-[ferredoxin] + NADP(+) + H(+) = 2 oxidized [2Fe-2S]-[ferredoxin] + NADPH. It functions in the pathway energy metabolism; photosynthesis. May play a key role in regulating the relative amounts of cyclic and non-cyclic electron flow to meet the demands of the plant for ATP and reducing power. Is involved in nitrate assimilation. The chain is Ferredoxin--NADP reductase, root-type isozyme, chloroplastic from Nicotiana tabacum (Common tobacco).